We begin with the raw amino-acid sequence, 95 residues long: Putative defensin-like protein 262 (95 aa).

The first 26 residues, 1–26 (MEKTSLKLIFLFSLTVIAFCSSLGDA), serve as a signal peptide directing secretion. Cystine bridges form between C48–C95, C64–C83, C70–C91, and C74–C93.

The protein belongs to the DEFL family.

It localises to the secreted. This is Putative defensin-like protein 262 from Arabidopsis thaliana (Mouse-ear cress).